A 457-amino-acid chain; its full sequence is Embryogenesis-associated protein EMB8 (457 aa).

The interval 39–59 (KKPAAGACEEQDELTSGSAAR) is disordered. An AB hydrolase-1 domain is found at 151–391 (PVLILLPGLT…LVVTPNGGHL (241 aa)). Residues serine 231, aspartate 361, and histidine 390 each act as charge relay system in the active site. Basic and acidic residues predominate over residues 438–447 (VDSVHTRETN). Residues 438–457 (VDSVHTRETNNYKSPIENVN) are disordered. Positions 448–457 (NYKSPIENVN) are enriched in polar residues.

Belongs to the AB hydrolase superfamily. AB hydrolase 4 family.

This is Embryogenesis-associated protein EMB8 (EMB8) from Picea glauca (White spruce).